The following is a 237-amino-acid chain: Ditrans,polycis-undecaprenyl-diphosphate synthase ((2E,6E)-farnesyl-diphosphate specific) (237 aa).

D11 is a catalytic residue. Residue D11 participates in Mg(2+) binding. Substrate contacts are provided by residues 12–15, W16, R24, H28, and 56–58; these read GNGR and SIE. N59 serves as the catalytic Proton acceptor. Substrate-binding positions include R62, R179, and 185 to 187; that span reads RLS. A Mg(2+)-binding site is contributed by E198.

The protein belongs to the UPP synthase family. In terms of assembly, homodimer. The cofactor is Mg(2+).

The enzyme catalyses 8 isopentenyl diphosphate + (2E,6E)-farnesyl diphosphate = di-trans,octa-cis-undecaprenyl diphosphate + 8 diphosphate. In terms of biological role, catalyzes the sequential condensation of isopentenyl diphosphate (IPP) with (2E,6E)-farnesyl diphosphate (E,E-FPP) to yield (2Z,6Z,10Z,14Z,18Z,22Z,26Z,30Z,34E,38E)-undecaprenyl diphosphate (di-trans,octa-cis-UPP). UPP is the precursor of glycosyl carrier lipid in the biosynthesis of bacterial cell wall polysaccharide components such as peptidoglycan and lipopolysaccharide. The protein is Ditrans,polycis-undecaprenyl-diphosphate synthase ((2E,6E)-farnesyl-diphosphate specific) of Coxiella burnetii (strain RSA 493 / Nine Mile phase I).